The sequence spans 319 residues: 4-hydroxy-3-methylbut-2-enyl diphosphate reductase (319 aa).

Cysteine 17 contacts [4Fe-4S] cluster. (2E)-4-hydroxy-3-methylbut-2-enyl diphosphate-binding residues include histidine 46 and histidine 79. The dimethylallyl diphosphate site is built by histidine 46 and histidine 79. Residues histidine 46 and histidine 79 each contribute to the isopentenyl diphosphate site. Position 101 (cysteine 101) interacts with [4Fe-4S] cluster. Histidine 129 serves as a coordination point for (2E)-4-hydroxy-3-methylbut-2-enyl diphosphate. Histidine 129 serves as a coordination point for dimethylallyl diphosphate. Histidine 129 is a binding site for isopentenyl diphosphate. Glutamate 131 serves as the catalytic Proton donor. A (2E)-4-hydroxy-3-methylbut-2-enyl diphosphate-binding site is contributed by threonine 170. Cysteine 200 is a [4Fe-4S] cluster binding site. Residues serine 228, serine 229, asparagine 230, and serine 273 each contribute to the (2E)-4-hydroxy-3-methylbut-2-enyl diphosphate site. Dimethylallyl diphosphate is bound by residues serine 228, serine 229, asparagine 230, and serine 273. Residues serine 228, serine 229, asparagine 230, and serine 273 each contribute to the isopentenyl diphosphate site.

It belongs to the IspH family. Requires [4Fe-4S] cluster as cofactor.

The enzyme catalyses isopentenyl diphosphate + 2 oxidized [2Fe-2S]-[ferredoxin] + H2O = (2E)-4-hydroxy-3-methylbut-2-enyl diphosphate + 2 reduced [2Fe-2S]-[ferredoxin] + 2 H(+). The catalysed reaction is dimethylallyl diphosphate + 2 oxidized [2Fe-2S]-[ferredoxin] + H2O = (2E)-4-hydroxy-3-methylbut-2-enyl diphosphate + 2 reduced [2Fe-2S]-[ferredoxin] + 2 H(+). The protein operates within isoprenoid biosynthesis; dimethylallyl diphosphate biosynthesis; dimethylallyl diphosphate from (2E)-4-hydroxy-3-methylbutenyl diphosphate: step 1/1. It participates in isoprenoid biosynthesis; isopentenyl diphosphate biosynthesis via DXP pathway; isopentenyl diphosphate from 1-deoxy-D-xylulose 5-phosphate: step 6/6. Functionally, catalyzes the conversion of 1-hydroxy-2-methyl-2-(E)-butenyl 4-diphosphate (HMBPP) into a mixture of isopentenyl diphosphate (IPP) and dimethylallyl diphosphate (DMAPP). Acts in the terminal step of the DOXP/MEP pathway for isoprenoid precursor biosynthesis. The sequence is that of 4-hydroxy-3-methylbut-2-enyl diphosphate reductase from Cereibacter sphaeroides (strain ATCC 17023 / DSM 158 / JCM 6121 / CCUG 31486 / LMG 2827 / NBRC 12203 / NCIMB 8253 / ATH 2.4.1.) (Rhodobacter sphaeroides).